A 383-amino-acid polypeptide reads, in one-letter code: Neuropeptide Y receptor type 1 (383 aa).

The Extracellular segment spans residues 1–34 (MNSTSFSQLENHSVHYNLSEEKPSFFAFENDDCH). N-linked (GlcNAc...) asparagine glycans are attached at residues Asn2, Asn11, and Asn17. A helical transmembrane segment spans residues 35–55 (LPLAVIFTLALAYGAVIILGV). The Cytoplasmic segment spans residues 56 to 87 (SGNLALILIILKQKEMRNVTNILIVNLSFSDL). The chain crosses the membrane as a helical span at residues 88-108 (LVAIMCLPFTFVYTLMDHWIF). The Extracellular portion of the chain corresponds to 109–116 (GEIMCKLN). A disulfide bridge links Cys113 with Cys198. A helical membrane pass occupies residues 117–137 (PFVQCVSITVSIFSLVLIAVE). At 138–154 (RHQLIINPRGWRPNNRH) the chain is on the cytoplasmic side. The helical transmembrane segment at 155–175 (AYIGIAVIWVLAVASSLPFMI) threads the bilayer. Topologically, residues 176-211 (YQVLTDEPFQNVTLDAFKDKLVCFDQFPSDSHRLSY) are extracellular. A helical membrane pass occupies residues 212-232 (TTLLLVLQYFGPLCFIFICYF). Over 233-260 (KIYIRLKRRNNMMDKMRDSKYRSSESKR) the chain is Cytoplasmic. The chain crosses the membrane as a helical span at residues 261–281 (INIMLLSIVVAFAVCWLPLTI). At 282-299 (FNTVFDWNHQIIATCNHN) the chain is on the extracellular side. A helical membrane pass occupies residues 300–320 (LLFLLCHLTAMISTCVNPIFY). At 321–383 (GFLNKNFQRD…KISCVENEKI (63 aa)) the chain is on the cytoplasmic side. Cys338 carries the S-palmitoyl cysteine lipid modification. 2 positions are modified to phosphoserine: Ser368 and Ser376.

The protein belongs to the G-protein coupled receptor 1 family.

The protein localises to the cell membrane. Its function is as follows. Receptor for neuropeptide Y and peptide YY. This is Neuropeptide Y receptor type 1 (NPY1R) from Cavia porcellus (Guinea pig).